We begin with the raw amino-acid sequence, 208 residues long: NADH-ubiquinone oxidoreductase chain 4 (208 aa).

The next 6 membrane-spanning stretches (helical) occupy residues 23–43, 60–80, 93–113, 114–134, 147–167, and 188–208; these read VWIN…VTLW, SLSS…LLAS, KMYI…FSAN, ELIM…IIIT, LYFL…LISI, and PTWS…IKMP.

It belongs to the complex I subunit 4 family. In terms of assembly, core subunit of respiratory chain NADH dehydrogenase (Complex I) which is composed of 45 different subunits.

Its subcellular location is the mitochondrion inner membrane. The catalysed reaction is a ubiquinone + NADH + 5 H(+)(in) = a ubiquinol + NAD(+) + 4 H(+)(out). In terms of biological role, core subunit of the mitochondrial membrane respiratory chain NADH dehydrogenase (Complex I) which catalyzes electron transfer from NADH through the respiratory chain, using ubiquinone as an electron acceptor. Essential for the catalytic activity and assembly of complex I. In Phodopus sungorus (Striped hairy-footed hamster), this protein is NADH-ubiquinone oxidoreductase chain 4 (MT-ND4).